The following is a 629-amino-acid chain: tRNA uridine 5-carboxymethylaminomethyl modification enzyme MnmG (629 aa).

11 to 16 provides a ligand contact to FAD; the sequence is GGGHAG. 273–287 contributes to the NAD(+) binding site; the sequence is GPRYCPSFEDKAVRF.

This sequence belongs to the MnmG family. Homodimer. Heterotetramer of two MnmE and two MnmG subunits. It depends on FAD as a cofactor.

It is found in the cytoplasm. NAD-binding protein involved in the addition of a carboxymethylaminomethyl (cmnm) group at the wobble position (U34) of certain tRNAs, forming tRNA-cmnm(5)s(2)U34. This is tRNA uridine 5-carboxymethylaminomethyl modification enzyme MnmG from Mycoplasma mycoides subsp. mycoides SC (strain CCUG 32753 / NCTC 10114 / PG1).